A 463-amino-acid polypeptide reads, in one-letter code: Endoglucanase (463 aa).

The first 27 residues, 1-27 (MVEKRKIFTVLCACGIGFTSYTSCISA), serve as a signal peptide directing secretion. Positions 28–55 (AAIDNDTLINNGHKINSSIITNSSQVSA) are excised as a propeptide. The active-site Proton donor is Glu130. Asp191 functions as the Nucleophile in the catalytic mechanism.

The protein belongs to the glycosyl hydrolase 8 (cellulase D) family. In terms of processing, the N- and the C-terminus may be subjected to proteolysis.

The enzyme catalyses Endohydrolysis of (1-&gt;4)-beta-D-glucosidic linkages in cellulose, lichenin and cereal beta-D-glucans.. This is Endoglucanase from Bacillus sp. (strain KSM-330).